A 100-amino-acid polypeptide reads, in one-letter code: Small ribosomal subunit protein uS14 (100 aa).

Belongs to the universal ribosomal protein uS14 family. Part of the 30S ribosomal subunit. Contacts proteins S3 and S10.

Binds 16S rRNA, required for the assembly of 30S particles and may also be responsible for determining the conformation of the 16S rRNA at the A site. This is Small ribosomal subunit protein uS14 from Parasynechococcus marenigrum (strain WH8102).